The primary structure comprises 465 residues: MNFTSFSITQGSRPQPPSTRGFSGNSFKSDLIPQSRRSHSVYGTPGSIRISSPSVPSAIVSSYSSTLSSALPSSSYGGNSFSSSTSFSSGGSDLLLGTSGKEAMQNLNDRLASYLEKVRSLEERNRELEQKIREWYEKQGAGTKTKDFSHYFKIIADLQKQIHDGNMENAKILLRIDNAKLAADDFKQKWEAEQVMRLNVEGDINGLRRILDEMTLARADLEMQIDGQKEELAYLNKSHDEEMKALRSQLGGQVNVEVDAAPAEDLTKKLERMRQQYEQLAEKNRKDAEDWFMKASEDLNKNVASSTEAIQTTKTEINELKRTIQGLQIELQSQLSMKDALEGQLADTEHRYSSILMNLQNIIHQKEAELSDIRADTERQANEYKILFDAKTKLENEIRTYRILLEGDEGKFQTSPHHPSIVTKQTETVVTPVVITNVKTVVEEIIDGKIVSKKEYPGPPEKLMI.

Residues 1–28 (MNFTSFSITQGSRPQPPSTRGFSGNSFK) are compositionally biased toward polar residues. The disordered stretch occupies residues 1–47 (MNFTSFSITQGSRPQPPSTRGFSGNSFKSDLIPQSRRSHSVYGTPGS). Residues 1–98 (MNFTSFSITQ…SGGSDLLLGT (98 aa)) form a head region. Positions 99 to 135 (SGKEAMQNLNDRLASYLEKVRSLEERNRELEQKIREW) are coil 1A. The IF rod domain maps to 100-412 (GKEAMQNLND…ILLEGDEGKF (313 aa)). The tract at residues 136–154 (YEKQGAGTKTKDFSHYFKI) is linker 1. Positions 155-246 (IADLQKQIHD…KSHDEEMKAL (92 aa)) are coil 1B. The linker 12 stretch occupies residues 247 to 269 (RSQLGGQVNVEVDAAPAEDLTKK). Residues 270–408 (LERMRQQYEQ…RTYRILLEGD (139 aa)) are coil 2. The tract at residues 409 to 465 (EGKFQTSPHHPSIVTKQTETVVTPVVITNVKTVVEEIIDGKIVSKKEYPGPPEKLMI) is tail.

Belongs to the intermediate filament family. In terms of assembly, heterotetramer of two type I and two type II keratins. In terms of tissue distribution, expressed in skin.

Its function is as follows. Type 1 keratin. May maintain oral mucosal cell homeostasis and tissue organization in response to mechanical stress. The protein is Keratin, type I cytoskeletal 13 (KRT13) of Protopterus aethiopicus (Marbled lungfish).